A 324-amino-acid polypeptide reads, in one-letter code: Rho crystallin (324 aa).

Position 2 is an N-acetylthreonine (Thr-2). Residue 218–281 participates in NADP(+) binding; it reads SVLGSHRDRN…SFTPARIKQN (64 aa).

Belongs to the aldo/keto reductase family. Monomer.

The chain is Rho crystallin from Aquarana catesbeiana (American bullfrog).